Reading from the N-terminus, the 136-residue chain is Peptide methionine sulfoxide reductase MsrB (136 aa).

Positions 9-136 (DAEWKALLAE…NSASLDFKPK (128 aa)) constitute a MsrB domain. Zn(2+)-binding residues include Cys-53, Cys-56, Cys-102, and Cys-105. Catalysis depends on Cys-125, which acts as the Nucleophile.

Belongs to the MsrB Met sulfoxide reductase family. Zn(2+) is required as a cofactor.

The catalysed reaction is L-methionyl-[protein] + [thioredoxin]-disulfide + H2O = L-methionyl-(R)-S-oxide-[protein] + [thioredoxin]-dithiol. The polypeptide is Peptide methionine sulfoxide reductase MsrB (Polaromonas sp. (strain JS666 / ATCC BAA-500)).